Consider the following 186-residue polypeptide: NADH-quinone oxidoreductase subunit B 2 (186 aa).

Residues 1–27 (MPSFTQPHSAPRNFQFPGQQRQGDPTM) form a disordered region. Residues Cys-65, Cys-66, Cys-130, and Cys-160 each contribute to the [4Fe-4S] cluster site.

Belongs to the complex I 20 kDa subunit family. As to quaternary structure, NDH-1 is composed of 14 different subunits. Subunits NuoB, C, D, E, F, and G constitute the peripheral sector of the complex. It depends on [4Fe-4S] cluster as a cofactor.

It is found in the cell inner membrane. It carries out the reaction a quinone + NADH + 5 H(+)(in) = a quinol + NAD(+) + 4 H(+)(out). Functionally, NDH-1 shuttles electrons from NADH, via FMN and iron-sulfur (Fe-S) centers, to quinones in the respiratory chain. The immediate electron acceptor for the enzyme in this species is believed to be ubiquinone. Couples the redox reaction to proton translocation (for every two electrons transferred, four hydrogen ions are translocated across the cytoplasmic membrane), and thus conserves the redox energy in a proton gradient. The protein is NADH-quinone oxidoreductase subunit B 2 of Rhizobium etli (strain ATCC 51251 / DSM 11541 / JCM 21823 / NBRC 15573 / CFN 42).